We begin with the raw amino-acid sequence, 70 residues long: Large ribosomal subunit protein bL31 (70 aa).

Zn(2+) is bound by residues Cys16, Cys18, Cys37, and Cys40.

It belongs to the bacterial ribosomal protein bL31 family. Type A subfamily. In terms of assembly, part of the 50S ribosomal subunit. Requires Zn(2+) as cofactor.

Functionally, binds the 23S rRNA. This Shewanella sediminis (strain HAW-EB3) protein is Large ribosomal subunit protein bL31.